The primary structure comprises 224 residues: uncharacterized protein (224 aa).

A signal peptide spans 1-19 (MLRHITFTVFITTSMNTLA).

It belongs to the periplasmic pilus chaperone family.

It localises to the periplasm. Functionally, could be required for the biogenesis of a putative fimbria. This is an uncharacterized protein from Escherichia coli (strain K12).